We begin with the raw amino-acid sequence, 150 residues long: Transmembrane protein PMIS2 (150 aa).

Low complexity predominate over residues 1–12 (MALKPPSATQPA). The segment at 1-61 (MALKPPSATQ…EPQEPTQTPE (61 aa)) is disordered. Pro residues predominate over residues 13–22 (PNAPATPDAP). Over residues 23–61 (PTTGDPGASAAPGSPTTTGGPGAPAEVPQEPQEPTQTPE) the composition is skewed to low complexity. 2 helical membrane-spanning segments follow: residues 71 to 91 (LCLT…ALYF) and 130 to 150 (GWFG…LVLY).

This sequence belongs to the CD225/Dispanin family.

The protein localises to the membrane. Its function is as follows. May play a role in spermatozoa mobility. The chain is Transmembrane protein PMIS2 from Homo sapiens (Human).